A 122-amino-acid polypeptide reads, in one-letter code: Large ribosomal subunit protein uL14 (122 aa).

Belongs to the universal ribosomal protein uL14 family. Part of the 50S ribosomal subunit. Forms a cluster with proteins L3 and L19. In the 70S ribosome, L14 and L19 interact and together make contacts with the 16S rRNA in bridges B5 and B8.

Functionally, binds to 23S rRNA. Forms part of two intersubunit bridges in the 70S ribosome. The chain is Large ribosomal subunit protein uL14 from Corynebacterium glutamicum (strain R).